The primary structure comprises 307 residues: Fructokinase (307 aa).

This sequence belongs to the carbohydrate kinase PfkB family.

The enzyme catalyses D-fructose + ATP = D-fructose 6-phosphate + ADP + H(+). This is Fructokinase (scrK) from Vibrio alginolyticus.